A 567-amino-acid polypeptide reads, in one-letter code: Dihydroxy-acid dehydratase (567 aa).

C52 is a binding site for [2Fe-2S] cluster. D84 lines the Mg(2+) pocket. C125 contacts [2Fe-2S] cluster. 2 residues coordinate Mg(2+): D126 and K127. K127 is subject to N6-carboxylysine. C197 contributes to the [2Fe-2S] cluster binding site. A Mg(2+)-binding site is contributed by E448. S474 serves as the catalytic Proton acceptor.

Belongs to the IlvD/Edd family. As to quaternary structure, homodimer. [2Fe-2S] cluster is required as a cofactor. Mg(2+) serves as cofactor.

The catalysed reaction is (2R)-2,3-dihydroxy-3-methylbutanoate = 3-methyl-2-oxobutanoate + H2O. It catalyses the reaction (2R,3R)-2,3-dihydroxy-3-methylpentanoate = (S)-3-methyl-2-oxopentanoate + H2O. It functions in the pathway amino-acid biosynthesis; L-isoleucine biosynthesis; L-isoleucine from 2-oxobutanoate: step 3/4. It participates in amino-acid biosynthesis; L-valine biosynthesis; L-valine from pyruvate: step 3/4. Functionally, functions in the biosynthesis of branched-chain amino acids. Catalyzes the dehydration of (2R,3R)-2,3-dihydroxy-3-methylpentanoate (2,3-dihydroxy-3-methylvalerate) into 2-oxo-3-methylpentanoate (2-oxo-3-methylvalerate) and of (2R)-2,3-dihydroxy-3-methylbutanoate (2,3-dihydroxyisovalerate) into 2-oxo-3-methylbutanoate (2-oxoisovalerate), the penultimate precursor to L-isoleucine and L-valine, respectively. In Streptococcus pneumoniae serotype 2 (strain D39 / NCTC 7466), this protein is Dihydroxy-acid dehydratase.